The following is a 359-amino-acid chain: Peptide chain release factor 1 (359 aa).

Glutamine 236 carries the post-translational modification N5-methylglutamine.

It belongs to the prokaryotic/mitochondrial release factor family. Post-translationally, methylated by PrmC. Methylation increases the termination efficiency of RF1.

Its subcellular location is the cytoplasm. Functionally, peptide chain release factor 1 directs the termination of translation in response to the peptide chain termination codons UAG and UAA. The polypeptide is Peptide chain release factor 1 (Malacoplasma penetrans (strain HF-2) (Mycoplasma penetrans)).